A 155-amino-acid polypeptide reads, in one-letter code: DNA-binding protein inhibitor ID-1 (155 aa).

Residues 53 to 105 (LPALLDEQQVNVLLYDMNGCYSRLKELVPTLPQNRKVSKVEILQHVIDYIRDL) enclose the bHLH domain. The Nuclear export signal signature appears at 98–111 (VIDYIRDLQLELNS).

In terms of assembly, heterodimer with other HLH proteins. Interacts with COPS5, IFI204, GATA4 and NKX2-5. Interacts with CLOCK and BMAL1.

The protein localises to the cytoplasm. The protein resides in the nucleus. In terms of biological role, transcriptional regulator (lacking a basic DNA binding domain) which negatively regulates the basic helix-loop-helix (bHLH) transcription factors by forming heterodimers and inhibiting their DNA binding and transcriptional activity. Implicated in regulating a variety of cellular processes, including cellular growth, senescence, differentiation, apoptosis, angiogenesis, and neoplastic transformation. Inhibits skeletal muscle and cardiac myocyte differentiation. Regulates the circadian clock by repressing the transcriptional activator activity of the CLOCK-BMAL1 heterodimer. The protein is DNA-binding protein inhibitor ID-1 (ID1) of Homo sapiens (Human).